A 662-amino-acid polypeptide reads, in one-letter code: Fructose-1,6-bisphosphatase class 3 (662 aa).

This sequence belongs to the FBPase class 3 family. The cofactor is Mn(2+).

It carries out the reaction beta-D-fructose 1,6-bisphosphate + H2O = beta-D-fructose 6-phosphate + phosphate. It participates in carbohydrate biosynthesis; gluconeogenesis. The polypeptide is Fructose-1,6-bisphosphatase class 3 (Clostridium tetani (strain Massachusetts / E88)).